The chain runs to 320 residues: Bifunctional phosphoglucose/phosphomannose isomerase (320 aa).

In terms of domain architecture, SIS spans 20–153 (IAKDLTPYKG…NLLGVDKDEL (134 aa)). The D-fructose 6-phosphate site is built by glycine 37, serine 38, serine 80, serine 82, threonine 85, and arginine 132. Glutamate 204 functions as the Proton acceptor in the catalytic mechanism. 2 residues coordinate D-fructose 6-phosphate: histidine 220 and lysine 313. The active-site Proton donor is the histidine 220. Lysine 313 acts as the Proton acceptor in catalysis.

The protein belongs to the PGI/PMI family. Homodimer.

It carries out the reaction alpha-D-glucose 6-phosphate = beta-D-fructose 6-phosphate. The enzyme catalyses D-mannose 6-phosphate = D-fructose 6-phosphate. Functionally, dual specificity isomerase that catalyzes the isomerization of both glucose-6-phosphate and mannose-6-phosphate to fructose-6-phosphate. The polypeptide is Bifunctional phosphoglucose/phosphomannose isomerase (Aquifex aeolicus (strain VF5)).